We begin with the raw amino-acid sequence, 318 residues long: Thymidylate synthase (318 aa).

DUMP is bound by residues R25 and 180–181; that span reads RR. C200 acts as the Nucleophile in catalysis. Residues 220–223, N231, and 261–263 contribute to the dUMP site; these read RSGD and HIY. D223 lines the (6R)-5,10-methylene-5,6,7,8-tetrahydrofolate pocket. A317 serves as a coordination point for (6R)-5,10-methylene-5,6,7,8-tetrahydrofolate.

It belongs to the thymidylate synthase family. Bacterial-type ThyA subfamily. Homodimer.

It is found in the cytoplasm. It catalyses the reaction dUMP + (6R)-5,10-methylene-5,6,7,8-tetrahydrofolate = 7,8-dihydrofolate + dTMP. Its pathway is pyrimidine metabolism; dTTP biosynthesis. Functionally, catalyzes the reductive methylation of 2'-deoxyuridine-5'-monophosphate (dUMP) to 2'-deoxythymidine-5'-monophosphate (dTMP) while utilizing 5,10-methylenetetrahydrofolate (mTHF) as the methyl donor and reductant in the reaction, yielding dihydrofolate (DHF) as a by-product. This enzymatic reaction provides an intracellular de novo source of dTMP, an essential precursor for DNA biosynthesis. The polypeptide is Thymidylate synthase (Bacillus thuringiensis subsp. konkukian (strain 97-27)).